Reading from the N-terminus, the 366-residue chain is Galactoside alpha-(1,2)-fucosyltransferase 1 (366 aa).

The Cytoplasmic portion of the chain corresponds to 1 to 8 (MWPRSHRH). A helical; Signal-anchor for type II membrane protein transmembrane segment spans residues 9–25 (LCLAFLLVCVLSAISFL). Residues 26–366 (IHFHQDSIRH…LSPLWPLAEP (341 aa)) lie on the Lumenal side of the membrane. Asn-66, Asn-302, and Asn-328 each carry an N-linked (GlcNAc...) asparagine glycan.

The protein belongs to the glycosyltransferase 11 family.

The protein resides in the golgi apparatus. It is found in the golgi stack membrane. It carries out the reaction a beta-D-galactosyl-(1-&gt;4)-N-acetyl-beta-D-glucosaminyl derivative + GDP-beta-L-fucose = an alpha-L-Fuc-(1-&gt;2)-beta-D-Gal-(1-&gt;4)-beta-D-GlcNAc derivative + GDP + H(+). It catalyses the reaction a ganglioside GA1 + GDP-beta-L-fucose = a ganglioside Fuc-GA1 + GDP + H(+). The enzyme catalyses a beta-D-Gal-(1-&gt;3)-beta-D-GlcNAc-(1-&gt;3)-beta-D-Gal-(1-&gt;4)-beta-D-Glc-(1&lt;-&gt;1')-Cer(d18:1(4E)) + GDP-beta-L-fucose = alpha-L-fucosyl-(1-&gt;2)- beta-D-galactosyl-(1-&gt;3)-N-acetyl-beta-D-glucosaminyl-(1-&gt;3)-beta-D-galactosyl-(1-&gt;4)-beta-D-glucosyl-(1&lt;-&gt;1')-N-acylsphing-4-enine + GDP + H(+). The catalysed reaction is a neolactoside nLc4Cer(d18:1(4E)) + GDP-beta-L-fucose = a neolactoside IV(2)-alpha-Fuc-nLc4Cer(d18:1(4E)) + GDP + H(+). It carries out the reaction a ganglioside GM1 + GDP-beta-L-fucose = a ganglioside Fuc-GM1 + GDP + H(+). It catalyses the reaction beta-D-galactosyl-(1-&gt;3)-N-acetyl-D-galactosamine + GDP-beta-L-fucose = alpha-L-fucosyl-(1-&gt;2)-beta-D-galactosyl-(1-&gt;3)-N-acetyl-D-galactosamine + GDP + H(+). Its pathway is protein modification; protein glycosylation. In terms of biological role, catalyzes the transfer of L-fucose, from a guanosine diphosphate-beta-L-fucose, to the terminal galactose residue of glycoconjugates through an alpha(1,2) linkage leading to H antigen synthesis that is an intermediate substrate in the synthesis of ABO blood group antigens. H antigen is essential for maturation of the glomerular layer of the main olfactory bulb, in cell migration and early cell-cell contacts during tumor associated angiogenesis. Preferentially fucosylates soluble lactose and to a lesser extent fucosylates glycolipids gangliosides GA1 and GM1a. In Saimiri sciureus (Common squirrel monkey), this protein is Galactoside alpha-(1,2)-fucosyltransferase 1.